The sequence spans 1008 residues: Phytosulfokine receptor 1 (1008 aa).

Positions 1–25 (MRVHRFCVIVIFLTELLCFFYSSES) are cleaved as a signal peptide. 3 N-linked (GlcNAc...) asparagine glycosylation sites follow: N55, N64, and N73. LRR repeat units lie at residues 75 to 98 (TGRVIRLELGNKKLSGKLSESLGK), 99 to 123 (LDEIRVLNLSRNFIKDSIPLSIFNL), 124 to 148 (KNLQTLDLSSNDLSGGIPTSINLPA), 150 to 170 (QSFDLSSNKFNGSLPSHICHN), 172 to 194 (TQIRVVKLAVNYFAGNFTSGFGK), 195 to 219 (CVLLEHLCLGMNDLTGNIPEDLFHL), 221 to 243 (RLNLLGIQENRLSGSLSREIRNL), 244 to 266 (SSLVRLDVSWNLFSGEIPDVFDE), 291 to 315 (SPSLNLLNLRNNSLSGRLMLNCTAM), 316 to 339 (IALNSLDLGTNRFNGRLPENLPDC), 341 to 362 (RLKNVNLARNTFHGQVPESFKN), and 363 to 387 (FESLSYFSLSNSSLANISSALGILQ). Residue N106 is glycosylated (N-linked (GlcNAc...) asparagine). 3 N-linked (GlcNAc...) asparagine glycosylation sites follow: N160, N170, and N187. N242 carries N-linked (GlcNAc...) asparagine glycosylation. R300 is a phytosulfokine binding site. N301 and N311 each carry an N-linked (GlcNAc...) asparagine glycan. Phytosulfokine contacts are provided by N346, S370, and S372. N-linked (GlcNAc...) asparagine glycosylation is found at N373, N378, and N391. LRR repeat units lie at residues 392 to 414 (LTTLVLTLNFHGEALPDDSSLHF), 415 to 438 (EKLKVLVVANCRLTGSMPRWLSSS), 439 to 464 (NELQLLDLSWNRLTGAIPSWIGDFKA), and 466 to 486 (FYLDLSNNSFTGEIPKSLTKL). 3 residues coordinate phytosulfokine: T398, N424, and D445. N472 and N493 each carry an N-linked (GlcNAc...) asparagine glycan. K508 contributes to the phytosulfokine binding site. N-linked (GlcNAc...) asparagine glycans are attached at residues N510 and N534. LRR repeat units lie at residues 521–545 (IFGFPPTIELGHNNLSGPIWEEFGN), 546–570 (LKKLHVFDLKWNALSGSIPSSLSGM), 571–594 (TSLEALDLSNNRLSGSIPVSLQQL), and 596–619 (FLSKFSVAYNNLSGVIPSGGQFQT). N606 and N622 each carry an N-linked (GlcNAc...) asparagine glycan. The helical transmembrane segment at 660–680 (MAIGIAFGSVFLLTLLSLIVL) threads the bilayer. At T731 the chain carries Phosphothreonine. A Protein kinase domain is found at 734–1005 (FDQANIIGCG…PTTQQLVSWL (272 aa)). Residues 740–748 (IGCGGFGMV) and K762 each bind ATP. Phosphotyrosine occurs at positions 807 and 847. The active-site Proton acceptor is the D860. Residue Y902 is modified to Phosphotyrosine.

The protein belongs to the protein kinase superfamily. Ser/Thr protein kinase family. As to quaternary structure, homo- and heterodimers with PSY1R. Heterodimers with the somatic embryogenesis receptor-like kinases (SERKs). PSK is not directly involved in PSKR-SERK interaction but stabilizes PSKR island domain for recruitment of a SERK. Part of a functional complex containing PSKR1, BAK1, CNGC17, and AHA. Interacts with AHA1, AHA2, and BAK1, but not with CNGC17 or BRI1. Mg(2+) is required as a cofactor. Requires Mn(2+) as cofactor. As to expression, weakly expressed in roots, leaves, stems and flowers. Expressed in the primary and lateral roots, including root primordia and root tips, but not in the hypocotyl.

Its subcellular location is the cell membrane. The catalysed reaction is L-seryl-[protein] + ATP = O-phospho-L-seryl-[protein] + ADP + H(+). It carries out the reaction L-threonyl-[protein] + ATP = O-phospho-L-threonyl-[protein] + ADP + H(+). The enzyme catalyses GTP = 3',5'-cyclic GMP + diphosphate. With respect to regulation, cGMP suppresses kinase activity. Functionally, phytosulfokine receptor with both a serine/threonine-protein kinase activity and a guanylate cyclase activity. Regulates, in response to phytosulfokine binding, a signaling cascade involved in plant cell differentiation, organogenesis, somatic embryogenesis, cellular proliferation and plant growth. Involved in plant immunity, with antagonistic effects on bacterial and fungal resistances. Not involved in PSY perception. CNGC17 and AHAs form a functional cation-translocating unit that is activated by PSKR1/BAK1 and possibly other BAK1/RLK complexes. This is Phytosulfokine receptor 1 from Arabidopsis thaliana (Mouse-ear cress).